The primary structure comprises 290 residues: Enoyl-CoA hydratase, mitochondrial (290 aa).

A mitochondrion-targeting transit peptide spans Met1–Phe27. Residue Ala98 to Lys101 participates in substrate binding. An N6-acetyllysine; alternate modification is found at Lys101. Lys101 carries the N6-succinyllysine; alternate modification. Ser114 is subject to Phosphoserine. Residue Lys115 is modified to N6-acetyllysine; alternate. Lys115 is subject to N6-succinyllysine; alternate. Gly141 is a binding site for substrate. The residue at position 204 (Lys204) is an N6-succinyllysine. An N6-acetyllysine modification is found at Lys211. Position 217 is an N6-acetyllysine; alternate (Lys217). An N6-succinyllysine; alternate modification is found at Lys217.

This sequence belongs to the enoyl-CoA hydratase/isomerase family. Homohexamer; dimer of trimers. Acetylation of Lys-101 is observed in liver mitochondria from fasted mice but not from fed mice.

Its subcellular location is the mitochondrion matrix. It catalyses the reaction a (3S)-3-hydroxyacyl-CoA = a (2E)-enoyl-CoA + H2O. The catalysed reaction is a (3E)-enoyl-CoA = a 4-saturated (2E)-enoyl-CoA. The enzyme catalyses (3E)-hexenoyl-CoA = (2E)-hexenoyl-CoA. It carries out the reaction (3S)-3-hydroxybutanoyl-CoA = (2E)-butenoyl-CoA + H2O. It catalyses the reaction 3-hydroxyisovaleryl-CoA = 3-methylbut-2-enoyl-CoA + H2O. The catalysed reaction is 3-hydroxypropanoyl-CoA = acryloyl-CoA + H2O. The enzyme catalyses 3-hydroxybutanoyl-CoA = (2E)-butenoyl-CoA + H2O. It carries out the reaction 2-methylpropenoyl-CoA + H2O = (S)-3-hydroxyisobutanoyl-CoA. It catalyses the reaction (3S)-hydroxyhexanoyl-CoA = (2E)-hexenoyl-CoA + H2O. The catalysed reaction is (3S)-hydroxydecanoyl-CoA = (2E)-decenoyl-CoA + H2O. The protein operates within lipid metabolism; fatty acid beta-oxidation. Functionally, converts unsaturated trans-2-enoyl-CoA species ((2E)-enoyl-CoA) to the corresponding (3S)-3-hydroxyacyl-CoA species through addition of a water molecule to the double bond. Catalyzes the hydration of medium- and short-chained fatty enoyl-CoA thioesters from 4 carbons long (C4) up to C16. Has high substrate specificity for crotonyl-CoA ((2E)-butenoyl-CoA) and moderate specificity for acryloyl-CoA, 3-methylcrotonyl-CoA (3-methyl-(2E)-butenoyl-CoA) and methacrylyl-CoA ((2E)-2-methylpropenoyl-CoA). Can bind tiglyl-CoA (2-methylcrotonoyl-CoA), but hydrates only a small amount of this substrate. Plays a key role in the beta-oxidation spiral of short- and medium-chain fatty acid oxidation. At a lower rate than the hydratase reaction, catalyzes the isomerase reaction of trans-3-enoyl-CoA species (such as (3E)-hexenoyl-CoA) to trans-2-enoyl-CoA species (such as (2E)-hexenoyl-CoA), which are subsequently hydrated to 3(S)-3-hydroxyacyl-CoA species (such as (3S)-hydroxyhexanoyl-CoA). This is Enoyl-CoA hydratase, mitochondrial from Mus musculus (Mouse).